The sequence spans 100 residues: UPF0251 protein swp_0615 (100 aa).

It belongs to the UPF0251 family.

This chain is UPF0251 protein swp_0615, found in Shewanella piezotolerans (strain WP3 / JCM 13877).